A 219-amino-acid polypeptide reads, in one-letter code: Probable glucosamine 6-phosphate N-acetyltransferase (219 aa).

One can recognise an N-acetyltransferase domain in the interval 42-198 (MKVRPLKDTD…EGPTLKRNAT (157 aa)). Substrate is bound by residues T64, 111 to 114 (KFIH), and 123 to 125 (EDV). 133–138 (GKQLGK) contacts acetyl-CoA. Residues 154-155 (YK) and R186 contribute to the substrate site.

It belongs to the acetyltransferase family. GNA1 subfamily.

It catalyses the reaction D-glucosamine 6-phosphate + acetyl-CoA = N-acetyl-D-glucosamine 6-phosphate + CoA + H(+). It participates in nucleotide-sugar biosynthesis; UDP-N-acetyl-alpha-D-glucosamine biosynthesis; N-acetyl-alpha-D-glucosamine 1-phosphate from alpha-D-glucosamine 6-phosphate (route I): step 1/2. This is Probable glucosamine 6-phosphate N-acetyltransferase from Drosophila melanogaster (Fruit fly).